The following is a 260-amino-acid chain: Coiled-coil domain-containing protein 127 (260 aa).

Residues 76–139 (AVISEHRRAV…EKSRLQPLRN (64 aa)) adopt a coiled-coil conformation.

The protein is Coiled-coil domain-containing protein 127 (Ccdc127) of Mus musculus (Mouse).